A 408-amino-acid polypeptide reads, in one-letter code: Serine/threonine transporter SstT (408 aa).

Helical transmembrane passes span 11–31, 43–63, 82–102, 141–161, 192–212, 216–236, 290–310, 316–336, and 363–383; these read LANG…VSLA, FLGS…VFIL, IVVL…VLSM, ALMT…GLAL, IGIF…AIAG, LLAV…PLIV, IPLG…VLTL, LGIQ…AISA, and VAMQ…AAET.

Belongs to the dicarboxylate/amino acid:cation symporter (DAACS) (TC 2.A.23) family.

Its subcellular location is the cell inner membrane. It catalyses the reaction L-serine(in) + Na(+)(in) = L-serine(out) + Na(+)(out). The catalysed reaction is L-threonine(in) + Na(+)(in) = L-threonine(out) + Na(+)(out). Involved in the import of serine and threonine into the cell, with the concomitant import of sodium (symport system). The sequence is that of Serine/threonine transporter SstT from Shewanella sp. (strain ANA-3).